The primary structure comprises 447 residues: Tubulin beta chain (447 aa).

GTP-binding residues include glutamine 11, glutamate 69, serine 138, glycine 142, threonine 143, glycine 144, asparagine 204, and asparagine 226. Mg(2+) is bound at residue glutamate 69. The tract at residues 427–447 (EAHMDDEEAEEAYEDEAPPEE) is disordered. Residues 430-447 (MDDEEAEEAYEDEAPPEE) are compositionally biased toward acidic residues.

Belongs to the tubulin family. In terms of assembly, dimer of alpha and beta chains. A typical microtubule is a hollow water-filled tube with an outer diameter of 25 nm and an inner diameter of 15 nM. Alpha-beta heterodimers associate head-to-tail to form protofilaments running lengthwise along the microtubule wall with the beta-tubulin subunit facing the microtubule plus end conferring a structural polarity. Microtubules usually have 13 protofilaments but different protofilament numbers can be found in some organisms and specialized cells. It depends on Mg(2+) as a cofactor.

The protein resides in the cytoplasm. Its subcellular location is the cytoskeleton. Its function is as follows. Tubulin is the major constituent of microtubules, a cylinder consisting of laterally associated linear protofilaments composed of alpha- and beta-tubulin heterodimers. Microtubules grow by the addition of GTP-tubulin dimers to the microtubule end, where a stabilizing cap forms. Below the cap, tubulin dimers are in GDP-bound state, owing to GTPase activity of alpha-tubulin. The protein is Tubulin beta chain (TBB1) of Uromyces fabae (Rust fungus).